The following is a 365-amino-acid chain: Glutamate 5-kinase 1 (365 aa).

Lys9 lines the ATP pocket. Positions 49, 136, and 148 each coordinate substrate. ATP is bound by residues 168–169 (TD) and 210–216 (TGGMKSK). Residues 276 to 353 (SGKITVDEGA…DEFHHEEGIE (78 aa)) enclose the PUA domain.

It belongs to the glutamate 5-kinase family.

It localises to the cytoplasm. It catalyses the reaction L-glutamate + ATP = L-glutamyl 5-phosphate + ADP. It functions in the pathway amino-acid biosynthesis; L-proline biosynthesis; L-glutamate 5-semialdehyde from L-glutamate: step 1/2. Its function is as follows. Catalyzes the transfer of a phosphate group to glutamate to form L-glutamate 5-phosphate. The protein is Glutamate 5-kinase 1 of Bacillus licheniformis (strain ATCC 14580 / DSM 13 / JCM 2505 / CCUG 7422 / NBRC 12200 / NCIMB 9375 / NCTC 10341 / NRRL NRS-1264 / Gibson 46).